The chain runs to 447 residues: Asparagine--tRNA ligase (447 aa).

This sequence belongs to the class-II aminoacyl-tRNA synthetase family. As to quaternary structure, homodimer.

The protein resides in the cytoplasm. It carries out the reaction tRNA(Asn) + L-asparagine + ATP = L-asparaginyl-tRNA(Asn) + AMP + diphosphate + H(+). In Herpetosiphon aurantiacus (strain ATCC 23779 / DSM 785 / 114-95), this protein is Asparagine--tRNA ligase.